Consider the following 548-residue polypeptide: 2-succinyl-5-enolpyruvyl-6-hydroxy-3-cyclohexene-1-carboxylate synthase (548 aa).

This sequence belongs to the TPP enzyme family. MenD subfamily. As to quaternary structure, homodimer. The cofactor is Mg(2+). Requires Mn(2+) as cofactor. It depends on thiamine diphosphate as a cofactor.

It catalyses the reaction isochorismate + 2-oxoglutarate + H(+) = 5-enolpyruvoyl-6-hydroxy-2-succinyl-cyclohex-3-ene-1-carboxylate + CO2. It functions in the pathway quinol/quinone metabolism; 1,4-dihydroxy-2-naphthoate biosynthesis; 1,4-dihydroxy-2-naphthoate from chorismate: step 2/7. It participates in quinol/quinone metabolism; menaquinone biosynthesis. Its function is as follows. Catalyzes the thiamine diphosphate-dependent decarboxylation of 2-oxoglutarate and the subsequent addition of the resulting succinic semialdehyde-thiamine pyrophosphate anion to isochorismate to yield 2-succinyl-5-enolpyruvyl-6-hydroxy-3-cyclohexene-1-carboxylate (SEPHCHC). In Mycobacterium ulcerans (strain Agy99), this protein is 2-succinyl-5-enolpyruvyl-6-hydroxy-3-cyclohexene-1-carboxylate synthase.